We begin with the raw amino-acid sequence, 677 residues long: mRNA 3'-end-processing protein RNA14 (677 aa).

HAT repeat units follow at residues 56–88 (ESYA…GELA), 90–124 (DEFE…YIRR), 138–170 (VIVK…FLEQ), 181–214 (QRID…WEQE), 257–289 (RTAN…WERE), and 298–330 (MLSQ…YISE).

As to quaternary structure, component of the CFIA complex, which is composed of RNA14, RNA15, PCF11 and CLP1. Interacts with FIP1, PFS2, YSH1 and probably also with RNA15. Probably interacts with the phosphorylated CTD domain of RPB1/RNA polymerase II.

It is found in the nucleus. The protein localises to the cytoplasm. Functionally, component of the cleavage factor IA (CFIA) complex, which is involved in the endonucleolytic cleavage during polyadenylation-dependent pre-mRNA 3'-end formation and cooperates with the cleavage factor NAB4/CFIB and the cleavage and polyadenylation factor (CPF) complex. The chain is mRNA 3'-end-processing protein RNA14 (RNA14) from Saccharomyces cerevisiae (strain ATCC 204508 / S288c) (Baker's yeast).